A 400-amino-acid chain; its full sequence is MKNYHAPDEKGFFGEHGGLFVSETLIPALQELADAYKAAKNDPEFWEAFRHDLKHYVGRPSPVYHAARLSEHLGGAQIWLKREDLNHTGAHKVNNTIGQALLAKRMGKKRVIAETGAGQHGVASATVAARFGMTCDVYMGADDIQRQMPNVFRMKLLGANVVGVESGSRTLKDAMNEAMREWVARVDDTFYIIGTAAGPAPYPEMVRDFQCVIGNEAKAQMQEAIGRQPDVAVACVGGGSNAIGLFHPYIGEENVRLVGVEAGGLGVNTPDHAAPITSGAPIGVLHGFRSYLMQDENGQVLGTHSVSAGLDYPGIGPEHSHLHDIKRVEYTVAKDDEALEAFDLLCRFEGIIPALESSHAVAWAVKNAPKMGKDQVILVNLSGRGDKDINTVAKLKGIKL.

Lysine 92 is modified (N6-(pyridoxal phosphate)lysine).

Belongs to the TrpB family. In terms of assembly, tetramer of two alpha and two beta chains. Pyridoxal 5'-phosphate is required as a cofactor.

The catalysed reaction is (1S,2R)-1-C-(indol-3-yl)glycerol 3-phosphate + L-serine = D-glyceraldehyde 3-phosphate + L-tryptophan + H2O. It functions in the pathway amino-acid biosynthesis; L-tryptophan biosynthesis; L-tryptophan from chorismate: step 5/5. In terms of biological role, the beta subunit is responsible for the synthesis of L-tryptophan from indole and L-serine. The chain is Tryptophan synthase beta chain from Neisseria meningitidis serogroup A / serotype 4A (strain DSM 15465 / Z2491).